The sequence spans 200 residues: Early E1A 21 kDa protein (200 aa).

A disordered region spans residues 78–98 (QDSTTATSAEEPSASTDSISS). The LXCXE motif, interaction with host RB1 motif lies at 114-118 (LRCYE). The segment at 136–151 (CSTCGGHEVNGFCSLC) is a zinc-finger region. The short motif at 196–200 (SRHDE) is the Nuclear localization signal element.

As to quaternary structure, interaction with host RB1 induces the aberrant dissociation of RB1-E2F1 complex thereby disrupting RB1's activity.

Its function is as follows. E1A protein has both transforming and trans-activating activities. Plays a role in viral genome replication by driving entry of quiescent cells into the cell cycle. Disrupts the function of host retinoblastoma protein RB1/pRb and isoform early E1A 26 kDa protein stabilizes TP53, which are key regulators of the cell cycle. Induces the disassembly of the E2F1 transcription factors from RB1 by direct competition for the same binding site on RB1, with subsequent transcriptional activation of E2F1-regulated S-phase genes. Inactivation of the ability of RB1 to arrest the cell cycle is critical for cellular transformation, uncontrolled cellular growth and proliferation induced by viral infection. Stimulation of progression from G1 to S phase allows the virus to efficiently use the cellular DNA replicating machinery to achieve viral genome replication. The sequence is that of Early E1A 21 kDa protein from Murine adenovirus A serotype 1 (MAdV-1).